The chain runs to 723 residues: Hypoxia-inducible factor prolyl hydroxylase (723 aa).

Positions 39, 42, 54, 57, 63, 67, 75, and 79 each coordinate Zn(2+). An MYND-type; atypical zinc finger spans residues 39 to 79 (CTYCGSSCTSSQLQTCLFCGTVAYCSKEHQQLDWLTHKMIC). Residues 249-270 (PSTASTATIPPPATTTSSATSS) are compositionally biased toward low complexity. Disordered stretches follow at residues 249 to 275 (PSTA…KSET) and 294 to 323 (IETE…KINY). The 99-residue stretch at 468–566 (GRSRAMLAIY…RFAITIWYMD (99 aa)) folds into the Fe2OG dioxygenase domain. Residues His-487, Asp-489, and His-548 each coordinate Fe cation. Residue Arg-557 coordinates 2-oxoglutarate. Residues 678–723 (RTTSLQSISDHFRSERSHERRSSTSSDQDLDEGLPPPPSTNPEYYI) form a disordered region. Basic and acidic residues predominate over residues 687–699 (DHFRSERSHERRS).

In terms of assembly, interacts (via catalytic domain) with lin-10 (via N-terminus); the interaction regulates lin-10 subcellular localization; the interaction is direct. Interacts (via catalytic domain) with swan-1 (via WD 1-3 repeats); the interaction may regulate vhl-1-independent hif-1 transcriptional activity; the interaction is direct. Interacts (via C-terminus) with cysl-1; the interaction is enhanced by hydrogen disulfide and activates hif-1-mediated transcription; the interaction is direct. Fe(2+) serves as cofactor. It depends on L-ascorbate as a cofactor. As to expression, in larvae and adults, expressed in pharyngeal and body wall muscles.

Its subcellular location is the cytoplasm. The protein localises to the nucleus. The protein resides in the cell projection. It localises to the dendrite. It is found in the axon. The catalysed reaction is L-prolyl-[hypoxia-inducible factor alpha subunit] + 2-oxoglutarate + O2 = trans-4-hydroxy-L-prolyl-[hypoxia-inducible factor alpha subunit] + succinate + CO2. With respect to regulation, inhibited by Co(2+) and dimethyloxalylglycine. Inhibited by the iron chelator 2, 2'-dipyridyl. Functionally, cellular oxygen sensor which regulates the stability and the activity of hypoxia-inducible transcription factor, hif-1. In normoxic conditions, hydroxylates hif-1 targeting it for vhl-1-mediated proteasomal degradation. In addition, regulates hif-1 transcriptional activity in a vhl-1-independent manner and independently of its hydroxylase activity. By regulating hif-1 activity, controls several cellular responses. Mediates susceptibility to B.thuringiensis and V.cholerae pore-forming toxins and enteropathogenic E.coli. Mediates susceptibility to P.aeruginosa PAO1-mediated killing by regulating resistance to cyanide produced by P.aeruginosa. Mediates resistance to S.aureus-mediated killing. In addition, plays a role in heat acclimation, neuronal development, behavioral responses to reoxygenation and hydrogen sulfide, iron homeostasis and aging. In neurons, involved in mitochondrion fusion during reoxygenation. Involved in egg laying. Regulates the trafficking of the glutamate receptor glr-1, probably independently of hif-1, by regulating lin-10 subcellular localization in response to oxygen levels. May hydroxylate lin-10. The sequence is that of Hypoxia-inducible factor prolyl hydroxylase from Caenorhabditis elegans.